The sequence spans 673 residues: DNA ligase (673 aa).

NAD(+) contacts are provided by residues 33 to 37 (DHQYD), 83 to 84 (SL), and Glu-117. Lys-119 functions as the N6-AMP-lysine intermediate in the catalytic mechanism. Residues Arg-140, Glu-175, Lys-282, and Lys-306 each contribute to the NAD(+) site. Residues Cys-400, Cys-403, Cys-418, and Cys-424 each contribute to the Zn(2+) site. Residues 592–673 (RGSSAISGKT…WVKMVEDARS (82 aa)) enclose the BRCT domain.

Belongs to the NAD-dependent DNA ligase family. LigA subfamily. The cofactor is Mg(2+). Mn(2+) serves as cofactor.

It carries out the reaction NAD(+) + (deoxyribonucleotide)n-3'-hydroxyl + 5'-phospho-(deoxyribonucleotide)m = (deoxyribonucleotide)n+m + AMP + beta-nicotinamide D-nucleotide.. In terms of biological role, DNA ligase that catalyzes the formation of phosphodiester linkages between 5'-phosphoryl and 3'-hydroxyl groups in double-stranded DNA using NAD as a coenzyme and as the energy source for the reaction. It is essential for DNA replication and repair of damaged DNA. This Anaplasma marginale (strain Florida) protein is DNA ligase.